We begin with the raw amino-acid sequence, 198 residues long: Protein hunchback (198 aa).

2 disordered regions span residues 16-117 (SHHH…PMQS) and 152-198 (NDKL…KYMA). The span at 17–31 (HHHHHHHAHHSHHQH) shows a compositional bias: basic residues. Low complexity-rich tracts occupy residues 35–46 (SNSNSNASSPHQ) and 68–83 (QQQQQQQQQQQQQQQQ). Over residues 95 to 105 (PSPSNNDQNSP) the composition is skewed to polar residues. A compositionally biased stretch (basic and acidic residues) spans 179–198 (EPEKEHDLMSNSSEDMKYMA).

It belongs to the hunchback C2H2-type zinc-finger protein family.

It localises to the nucleus. Gap class segmentation protein that controls development of head structures. In Drosophila disjuncta (Fruit fly), this protein is Protein hunchback (hb).